The primary structure comprises 292 residues: Nitrogenase iron protein 2 (292 aa).

8–15 (GKGGIGKS) is an ATP binding site. [4Fe-4S] cluster is bound at residue Cys106. An ADP-ribosylarginine; by dinitrogenase reductase ADP-ribosyltransferase modification is found at Arg109. Cys142 serves as a coordination point for [4Fe-4S] cluster.

It belongs to the NifH/BchL/ChlL family. As to quaternary structure, homodimer. [4Fe-4S] cluster serves as cofactor. Post-translationally, the reversible ADP-ribosylation of Arg-109 inactivates the nitrogenase reductase and regulates nitrogenase activity.

The enzyme catalyses N2 + 8 reduced [2Fe-2S]-[ferredoxin] + 16 ATP + 16 H2O = H2 + 8 oxidized [2Fe-2S]-[ferredoxin] + 2 NH4(+) + 16 ADP + 16 phosphate + 6 H(+). Its function is as follows. The key enzymatic reactions in nitrogen fixation are catalyzed by the nitrogenase complex, which has 2 components: the iron protein and the molybdenum-iron protein. The protein is Nitrogenase iron protein 2 (nifH2) of Methanothermococcus thermolithotrophicus (Methanococcus thermolithotrophicus).